The sequence spans 529 residues: Ectonucleoside triphosphate diphosphohydrolase 3 (529 aa).

At 1 to 22 (MFTVMTRQPCEQAGFRALSRTP) the chain is on the cytoplasmic side. The chain crosses the membrane as a helical span at residues 23-43 (AIVTLVVLLVSIVVLVTLTLI). At 44 to 485 (QIRHPQVLPP…PLIHLPIQPP (442 aa)) the chain is on the extracellular side. N81 carries an N-linked (GlcNAc...) asparagine glycan. A disulfide bond links C92 and C116. N149 carries N-linked (GlcNAc...) asparagine glycosylation. E182 functions as the Proton acceptor in the catalytic mechanism. 222-226 (GASTQ) is a binding site for ATP. N238, N284, and N318 each carry an N-linked (GlcNAc...) asparagine glycan. 3 disulfides stabilise this stretch: C261–C308, C289–C334, and C347–C353. Residues N381 and N392 are each glycosylated (N-linked (GlcNAc...) asparagine). C399 and C422 are oxidised to a cystine. N454 carries an N-linked (GlcNAc...) asparagine glycan. Residues 486–506 (VFMGVLAFFTAIALLCLAFLL) traverse the membrane as a helical segment. The Cytoplasmic portion of the chain corresponds to 507 to 529 (YLCSSFRTKERSENAFDQAVDSD).

It belongs to the GDA1/CD39 NTPase family. Requires Ca(2+) as cofactor. Mg(2+) is required as a cofactor.

The protein resides in the cell membrane. It catalyses the reaction a ribonucleoside 5'-triphosphate + 2 H2O = a ribonucleoside 5'-phosphate + 2 phosphate + 2 H(+). In terms of biological role, catalyzes the hydrolysis of nucleoside triphosphates and diphosphates. Has a threefold preference for the hydrolysis of ATP and UTP over ADP and UDP. This is Ectonucleoside triphosphate diphosphohydrolase 3 from Mus musculus (Mouse).